Here is a 336-residue protein sequence, read N- to C-terminus: 2-phospho-L-lactate transferase (336 aa).

Asp-49 contacts 7,8-didemethyl-8-hydroxy-5-deazariboflavin.

It belongs to the CofD family. As to quaternary structure, homodimer. The cofactor is Mg(2+).

It carries out the reaction (2S)-lactyl-2-diphospho-5'-guanosine + 7,8-didemethyl-8-hydroxy-5-deazariboflavin = oxidized coenzyme F420-0 + GMP + H(+). It participates in cofactor biosynthesis; coenzyme F420 biosynthesis. Functionally, catalyzes the transfer of the 2-phospholactate moiety from (2S)-lactyl-2-diphospho-5'-guanosine to 7,8-didemethyl-8-hydroxy-5-deazariboflavin (FO) with the formation of oxidized coenzyme F420-0 and GMP. The protein is 2-phospho-L-lactate transferase of Halobacterium salinarum (strain ATCC 700922 / JCM 11081 / NRC-1) (Halobacterium halobium).